The sequence spans 205 residues: Imidazole glycerol phosphate synthase subunit HisH (205 aa).

The Glutamine amidotransferase type-1 domain occupies 1–205 (MITIVDYQMG…RFATAPVEVA (205 aa)). Residue C79 is the Nucleophile of the active site. Active-site residues include H182 and E184.

As to quaternary structure, heterodimer of HisH and HisF.

Its subcellular location is the cytoplasm. The enzyme catalyses 5-[(5-phospho-1-deoxy-D-ribulos-1-ylimino)methylamino]-1-(5-phospho-beta-D-ribosyl)imidazole-4-carboxamide + L-glutamine = D-erythro-1-(imidazol-4-yl)glycerol 3-phosphate + 5-amino-1-(5-phospho-beta-D-ribosyl)imidazole-4-carboxamide + L-glutamate + H(+). The catalysed reaction is L-glutamine + H2O = L-glutamate + NH4(+). The protein operates within amino-acid biosynthesis; L-histidine biosynthesis; L-histidine from 5-phospho-alpha-D-ribose 1-diphosphate: step 5/9. Its function is as follows. IGPS catalyzes the conversion of PRFAR and glutamine to IGP, AICAR and glutamate. The HisH subunit catalyzes the hydrolysis of glutamine to glutamate and ammonia as part of the synthesis of IGP and AICAR. The resulting ammonia molecule is channeled to the active site of HisF. This Rhodopirellula baltica (strain DSM 10527 / NCIMB 13988 / SH1) protein is Imidazole glycerol phosphate synthase subunit HisH.